The following is a 236-amino-acid chain: 2-C-methyl-D-erythritol 4-phosphate cytidylyltransferase (236 aa).

Belongs to the IspD/TarI cytidylyltransferase family. IspD subfamily. In terms of assembly, homodimer.

The catalysed reaction is 2-C-methyl-D-erythritol 4-phosphate + CTP + H(+) = 4-CDP-2-C-methyl-D-erythritol + diphosphate. The protein operates within isoprenoid biosynthesis; isopentenyl diphosphate biosynthesis via DXP pathway; isopentenyl diphosphate from 1-deoxy-D-xylulose 5-phosphate: step 2/6. Catalyzes the formation of 4-diphosphocytidyl-2-C-methyl-D-erythritol from CTP and 2-C-methyl-D-erythritol 4-phosphate (MEP). The polypeptide is 2-C-methyl-D-erythritol 4-phosphate cytidylyltransferase (Salmonella schwarzengrund (strain CVM19633)).